Consider the following 469-residue polypeptide: MTVRVRFAPSPTGMFHVGGARSALQNWIFAKQRGGVFVLRVEDTDAARNKPEWTEGILSALEWIGIARGSYEGPYFQSSYAAEHRTAASRLHEGGRAYYCDCTREAVQARTGSPHSGYDGFCRDRDLGPGAGRALRFRTPDEGATVVVDLIRGEPTFENRLIEDFVIARSDGSPVFLLANVVDDMTMGITHVIRAEEHLPNTPKQQLLWEALGVKPPVWAHVPVVVNEKRQKLSKRRDKVALEAYRDEGYLADAMRNYLMLLGWAPSGDREIVPWPVIEEEFRLEQVNPSSAFFDEKKLRAFNGEYIRALPVAEFVAACQPWLTGTATIAPPPWQPDEFDADTFAAVAPLAQTRIAVLSEIVANVDFLFLDSPLIDEGAWAKAMKEGAGDLLDAAITAFTAIPSWDAESTKSALEAVGAEHGLKLGKAQAPVRVAVTGRRVGLPLFESLEVLGRERTLTRLRAARVRLP.

The 'HIGH' region signature appears at 9-19; that stretch reads PSPTGMFHVGG. Zn(2+)-binding residues include Cys100, Cys102, Cys122, and Asp124. Positions 232–236 match the 'KMSKS' region motif; that stretch reads KLSKR. Lys235 contributes to the ATP binding site.

Belongs to the class-I aminoacyl-tRNA synthetase family. Glutamate--tRNA ligase type 1 subfamily. In terms of assembly, monomer. It depends on Zn(2+) as a cofactor.

The protein localises to the cytoplasm. The enzyme catalyses tRNA(Glu) + L-glutamate + ATP = L-glutamyl-tRNA(Glu) + AMP + diphosphate. In terms of biological role, catalyzes the attachment of glutamate to tRNA(Glu) in a two-step reaction: glutamate is first activated by ATP to form Glu-AMP and then transferred to the acceptor end of tRNA(Glu). The chain is Glutamate--tRNA ligase from Salinispora arenicola (strain CNS-205).